A 334-amino-acid polypeptide reads, in one-letter code: Anthranilate phosphoribosyltransferase (334 aa).

Residues Gly79, 82-83, Ser87, 89-92, 107-115, and Ser119 each bind 5-phospho-alpha-D-ribose 1-diphosphate; these read GD, NIST, and KHGNRSISS. Gly79 is a binding site for anthranilate. Ser91 contributes to the Mg(2+) binding site. Asn110 contributes to the anthranilate binding site. Position 165 (Arg165) interacts with anthranilate. 2 residues coordinate Mg(2+): Asp224 and Glu225.

Belongs to the anthranilate phosphoribosyltransferase family. In terms of assembly, homodimer. Mg(2+) serves as cofactor.

The catalysed reaction is N-(5-phospho-beta-D-ribosyl)anthranilate + diphosphate = 5-phospho-alpha-D-ribose 1-diphosphate + anthranilate. The protein operates within amino-acid biosynthesis; L-tryptophan biosynthesis; L-tryptophan from chorismate: step 2/5. Catalyzes the transfer of the phosphoribosyl group of 5-phosphorylribose-1-pyrophosphate (PRPP) to anthranilate to yield N-(5'-phosphoribosyl)-anthranilate (PRA). This Streptococcus pneumoniae (strain ATCC 700669 / Spain 23F-1) protein is Anthranilate phosphoribosyltransferase.